The following is a 61-amino-acid chain: Large ribosomal subunit protein uL29 (61 aa).

This sequence belongs to the universal ribosomal protein uL29 family.

The sequence is that of Large ribosomal subunit protein uL29 from Stenotrophomonas maltophilia (strain K279a).